Here is a 111-residue protein sequence, read N- to C-terminus: Ribonuclease P protein component (111 aa).

Belongs to the RnpA family. As to quaternary structure, consists of a catalytic RNA component (M1 or rnpB) and a protein subunit.

The catalysed reaction is Endonucleolytic cleavage of RNA, removing 5'-extranucleotides from tRNA precursor.. Functionally, RNaseP catalyzes the removal of the 5'-leader sequence from pre-tRNA to produce the mature 5'-terminus. It can also cleave other RNA substrates such as 4.5S RNA. The protein component plays an auxiliary but essential role in vivo by binding to the 5'-leader sequence and broadening the substrate specificity of the ribozyme. This Streptococcus thermophilus (strain CNRZ 1066) protein is Ribonuclease P protein component.